A 628-amino-acid polypeptide reads, in one-letter code: Probable potassium transport system protein Kup (628 aa).

Helical transmembrane passes span 15 to 35 (LAIA…LYSL), 55 to 75 (VISL…VLFV), 104 to 124 (AGLL…DAVI), 142 to 162 (PHLS…LFWI), 173 to 193 (LFGP…LWHI), 210 to 230 (TFMA…VLVL), 252 to 272 (WYVL…ALLM), 281 to 301 (PFFL…STIA), 342 to 362 (IYVP…VIAF), 372 to 392 (YGIA…VVMV), 400 to 420 (LLVA…FGAN), and 426 to 446 (EGGW…MTWY).

This sequence belongs to the HAK/KUP transporter (TC 2.A.72) family.

The protein resides in the cell inner membrane. It catalyses the reaction K(+)(in) + H(+)(in) = K(+)(out) + H(+)(out). In terms of biological role, transport of potassium into the cell. Likely operates as a K(+):H(+) symporter. In Paraburkholderia xenovorans (strain LB400), this protein is Probable potassium transport system protein Kup.